We begin with the raw amino-acid sequence, 141 residues long: Large ribosomal subunit protein uL11 (141 aa).

Belongs to the universal ribosomal protein uL11 family. As to quaternary structure, part of the ribosomal stalk of the 50S ribosomal subunit. Interacts with L10 and the large rRNA to form the base of the stalk. L10 forms an elongated spine to which L12 dimers bind in a sequential fashion forming a multimeric L10(L12)X complex. In terms of processing, one or more lysine residues are methylated.

Functionally, forms part of the ribosomal stalk which helps the ribosome interact with GTP-bound translation factors. This Geobacillus sp. (strain WCH70) protein is Large ribosomal subunit protein uL11.